Consider the following 1128-residue polypeptide: Nck-associated protein 1 (1128 aa).

Positions 640–665 (AVNKKSKKQTGKKGEPEREKPGVESM) are disordered. Positions 651–665 (KKGEPEREKPGVESM) are enriched in basic and acidic residues. The chain crosses the membrane as a helical span at residues 995-1015 (IACLLMVFVAVSMPTLASNVM).

It belongs to the HEM-1/HEM-2 family.

The protein resides in the cell membrane. It localises to the cell projection. It is found in the lamellipodium membrane. Part of the WAVE complex that regulates lamellipodia formation. The WAVE complex regulates actin filament reorganization via its interaction with the Arp2/3 complex. Actin remodeling activity is regulated by RAC1. Plays a role in neural tube closure. This chain is Nck-associated protein 1 (nckap1), found in Danio rerio (Zebrafish).